The chain runs to 92 residues: uncharacterized protein (92 aa).

Positions 1-29 (MAAQTDYKKQVVGILLSLAFVLFVFSFSE) are cleaved as a signal peptide.

This is an uncharacterized protein from Bacillus subtilis (strain 168).